Consider the following 37-residue polypeptide: Putative preoptic regulatory factor 1 (37 aa).

2 consecutive propeptides follow at residues 1–7 (MPYSLQP) and 18–37 (FPLCMYMVRGSTWTLVPPDL).

It belongs to the GnRH family. As to expression, preoptic area and testis.

The protein resides in the secreted. In terms of biological role, precursor for a gonadotropin regulatory hormone (GNRH) related decapeptide. The protein is Putative preoptic regulatory factor 1 (Porf1) of Rattus norvegicus (Rat).